A 271-amino-acid chain; its full sequence is Shikimate dehydrogenase (NADP(+)) (271 aa).

Residues 14–16 (SQS) and T61 contribute to the shikimate site. The Proton acceptor role is filled by K65. Residues N86 and D101 each coordinate shikimate. Residues 125-129 (GAGGA), 148-153 (NRTHAR), and M212 contribute to the NADP(+) site. Shikimate is bound at residue Y214. G236 lines the NADP(+) pocket.

This sequence belongs to the shikimate dehydrogenase family. Homodimer.

It catalyses the reaction shikimate + NADP(+) = 3-dehydroshikimate + NADPH + H(+). Its pathway is metabolic intermediate biosynthesis; chorismate biosynthesis; chorismate from D-erythrose 4-phosphate and phosphoenolpyruvate: step 4/7. Its function is as follows. Involved in the biosynthesis of the chorismate, which leads to the biosynthesis of aromatic amino acids. Catalyzes the reversible NADPH linked reduction of 3-dehydroshikimate (DHSA) to yield shikimate (SA). The polypeptide is Shikimate dehydrogenase (NADP(+)) (Edwardsiella ictaluri (strain 93-146)).